The primary structure comprises 89 residues: Putative sodium channel toxin Ts30 (89 aa).

An N-terminal signal peptide occupies residues 1 to 17 (MFKLAIILALLFFGARA). The 65-residue stretch at 21-85 (RDGYPILSDG…FGDSGTPECH (65 aa)) folds into the LCN-type CS-alpha/beta domain. 4 cysteine pairs are disulfide-bonded: Cys31-Cys84, Cys35-Cys59, Cys44-Cys64, and Cys48-Cys66.

In terms of tissue distribution, expressed by the venom gland.

It localises to the secreted. This Tityus serrulatus (Brazilian scorpion) protein is Putative sodium channel toxin Ts30.